Reading from the N-terminus, the 127-residue chain is Small ribosomal subunit protein uS13 (127 aa).

A disordered region spans residues 90–127 (RRHRQGLPVRGQRTRTNARTRRGRRLTVAGKKKTPAKK). A compositionally biased stretch (basic residues) spans 101–127 (QRTRTNARTRRGRRLTVAGKKKTPAKK).

Belongs to the universal ribosomal protein uS13 family. In terms of assembly, part of the 30S ribosomal subunit. Forms a loose heterodimer with protein S19. Forms two bridges to the 50S subunit in the 70S ribosome.

Located at the top of the head of the 30S subunit, it contacts several helices of the 16S rRNA. In the 70S ribosome it contacts the 23S rRNA (bridge B1a) and protein L5 of the 50S subunit (bridge B1b), connecting the 2 subunits; these bridges are implicated in subunit movement. Contacts the tRNAs in the A and P-sites. The protein is Small ribosomal subunit protein uS13 of Synechocystis sp. (strain ATCC 27184 / PCC 6803 / Kazusa).